The sequence spans 109 residues: Putative pterin-4-alpha-carbinolamine dehydratase (109 aa).

It belongs to the pterin-4-alpha-carbinolamine dehydratase family.

The catalysed reaction is (4aS,6R)-4a-hydroxy-L-erythro-5,6,7,8-tetrahydrobiopterin = (6R)-L-erythro-6,7-dihydrobiopterin + H2O. This chain is Putative pterin-4-alpha-carbinolamine dehydratase, found in Vibrio cholerae serotype O1 (strain ATCC 39315 / El Tor Inaba N16961).